The chain runs to 289 residues: 4-diphosphocytidyl-2-C-methyl-D-erythritol kinase (289 aa).

Residue Lys-11 is part of the active site. 95-105 (PMGGGIGGGSS) contacts ATP. The active site involves Asp-137.

This sequence belongs to the GHMP kinase family. IspE subfamily.

The catalysed reaction is 4-CDP-2-C-methyl-D-erythritol + ATP = 4-CDP-2-C-methyl-D-erythritol 2-phosphate + ADP + H(+). It participates in isoprenoid biosynthesis; isopentenyl diphosphate biosynthesis via DXP pathway; isopentenyl diphosphate from 1-deoxy-D-xylulose 5-phosphate: step 3/6. In terms of biological role, catalyzes the phosphorylation of the position 2 hydroxy group of 4-diphosphocytidyl-2C-methyl-D-erythritol. The protein is 4-diphosphocytidyl-2-C-methyl-D-erythritol kinase of Aeromonas hydrophila subsp. hydrophila (strain ATCC 7966 / DSM 30187 / BCRC 13018 / CCUG 14551 / JCM 1027 / KCTC 2358 / NCIMB 9240 / NCTC 8049).